Reading from the N-terminus, the 491-residue chain is Glutamyl-tRNA(Gln) amidotransferase subunit A (491 aa).

Catalysis depends on charge relay system residues Lys-79 and Ser-154. Ser-178 serves as the catalytic Acyl-ester intermediate.

This sequence belongs to the amidase family. GatA subfamily. In terms of assembly, heterotrimer of A, B and C subunits.

The enzyme catalyses L-glutamyl-tRNA(Gln) + L-glutamine + ATP + H2O = L-glutaminyl-tRNA(Gln) + L-glutamate + ADP + phosphate + H(+). In terms of biological role, allows the formation of correctly charged Gln-tRNA(Gln) through the transamidation of misacylated Glu-tRNA(Gln) in organisms which lack glutaminyl-tRNA synthetase. The reaction takes place in the presence of glutamine and ATP through an activated gamma-phospho-Glu-tRNA(Gln). This chain is Glutamyl-tRNA(Gln) amidotransferase subunit A, found in Synechococcus sp. (strain CC9902).